Here is a 223-residue protein sequence, read N- to C-terminus: MTDIVVAIDGPAGTGKSSVSRGLARELGARYLDTGAMYRMMTLAVLRAGIDPADAAAIGESVWKVQMLSDHDRYFLGGEDVSSEIRTEEVTQAVSAVSAIPAVRVRLVDLQRQMAEGRGSVVVEGRDIGTVVLPDAPVKIFLTASPETRARRRNDQNVASGSADDYDRVLAEVRRRDHLDSTRAVSPLYVAQDAMIVDTSKMAEAEVIAHLMDLVKQRSGAVW.

Residue 10–18 participates in ATP binding; the sequence is GPAGTGKSS.

Belongs to the cytidylate kinase family. Type 1 subfamily.

It is found in the cytoplasm. The enzyme catalyses CMP + ATP = CDP + ADP. It carries out the reaction dCMP + ATP = dCDP + ADP. The chain is Cytidylate kinase from Mycobacterium leprae (strain Br4923).